The following is a 96-amino-acid chain: Putative defensin-like protein 263 (96 aa).

An N-terminal signal peptide occupies residues 1 to 26; sequence MEKTSLKLVFLFSLTVIALCLSLSAA. 4 disulfide bridges follow: C48/C96, C67/C86, C73/C91, and C77/C93.

Belongs to the DEFL family.

Its subcellular location is the secreted. The sequence is that of Putative defensin-like protein 263 from Arabidopsis thaliana (Mouse-ear cress).